The sequence spans 1534 residues: Ribosome-binding protein 1 (1534 aa).

The Lumenal portion of the chain corresponds to 1-7 (MDIYDTQ). Residues 8-28 (TLGVMVFGGFMVVSAIGIFLV) traverse the membrane as a helical segment. Topologically, residues 29–1534 (STFSMKETSY…DSSSKEGTSV (1506 aa)) are cytoplasmic. 2 disordered regions span residues 45-91 (QRKE…PAPN) and 125-152 (PAMPQEKLAPSPKDKKKKEKKVAKVEPA). Positions 52 to 63 (THHQKVEKKKKE) are enriched in basic residues. Residues 64 to 88 (KTVEKKGKTKKKEEKPNGKIPDHEP) are compositionally biased toward basic and acidic residues. Residues 125 to 135 (PAMPQEKLAPS) are compositionally biased toward low complexity. A Glycyl lysine isopeptide (Lys-Gly) (interchain with G-Cter in SUMO2) cross-link involves residue K148. 2 positions are modified to phosphoserine: S159 and S165. Disordered stretches follow at residues 173–780 (APKE…PLYL), 968–987 (KELVEKSEAARQEEQQRKAL), and 1021–1082 (RELC…RAEN). Residues 175-194 (KEVPMVVVPPVGAKAGTPAT) are compositionally biased toward low complexity. 54 repeat units span residues 197–206 (AQGKKAEGAQ), 207–216 (NQSRKAEGAP), 217–226 (NQGKKAEGAL), 227–236 (NQGKKAEGAQ), 237–246 (NQGKKVEVAP), 247–256 (NQGKKAEGGQ), 257–266 (NQGKKVEGAQ), 267–276 (NQGKKAEGTP), 277–286 (NQGKKAEGAP), 287–296 (NQGKKTDGAP), 297–306 (NQGKKSEGAP), 307–316 (NQGKKAEGAQ), 317–326 (NQGKKVEVAP), 327–336 (NQGKKAEGGQ), 337–346 (NQGKKVEGAQ), 347–356 (NQGKKAEGTP), 357–366 (NQGKKAEGAP), 367–376 (NQGKKTDGAP), 377–386 (NQGKKSEGAP), 387–396 (NQGKKVEGAQ), 397–406 (NQGKKVEGVQ), 407–416 (NQGKKAEGAQ), 417–426 (NQGKKAEGTS), 427–436 (SQGRKEEGTP), 437–446 (NLGKKAEGSP), 447–456 (NQGKKVEVVQ), 457–466 (NQSKKVEGAP), 467–476 (NQGKKAEGSQ), 477–486 (NQGKKTEGAS), 487–496 (NQGKKVDGAQ), 497–506 (NQGKKAEGAP), 507–516 (NQGKKVEGAQ), 517–526 (NQGKKAEGTP), 527–536 (NQGKKAEGAQ), 537–546 (NQGKKAEGAP), 547–556 (NQGKKAEGAP), 557–566 (NQGKKAEGAP), 567–576 (NQGKKAEGAP), 577–586 (NQGKKAEAAP), 587–596 (NQGKKAEGAP), 597–606 (NQGKKAEGAP), 607–616 (NQGKKAEAAP), 617–626 (NQGKKAEGAP), 627–636 (NQGKKAEGAP), 637–646 (NQGKKAEGAP), 647–656 (NQGKKAEGAQ), 657–666 (NQGKKAEGAP), 667–676 (NQGKKADLVA), 677–686 (NQGTKAEGVA), 687–696 (GQGKKAEGAP), 697–706 (NQGKKGEGTP), 707–716 (NQGKKSEGSP), 717–726 (NQGKKVDASA), and 727–736 (NQSKRAESAP). Residues 197 to 736 (AQGKKAEGAQ…NQSKRAESAP (540 aa)) are 54 X 10 AA tandem repeats of [NASG]-[QL]-[GS]-[KRT]-[KR]-[AVTSEG]-[ED]-[AGVLS]-[ATGSV]-[PQLSA]. Position 275 is a phosphothreonine (T275). Over residues 395–428 (AQNQGKKVEGVQNQGKKAEGAQNQGKKAEGTSSQ) the composition is skewed to polar residues. Over residues 474 to 499 (GSQNQGKKTEGASNQGKKVDGAQNQG) the composition is skewed to polar residues. The span at 705–718 (TPNQGKKSEGSPNQ) shows a compositional bias: polar residues. At S715 the chain carries Phosphoserine. S747 carries the post-translational modification Phosphoserine. K752 participates in a covalent cross-link: Glycyl lysine isopeptide (Lys-Gly) (interchain with G-Cter in SUMO1). S1032 carries the post-translational modification Phosphoserine. A compositionally biased stretch (basic and acidic residues) spans 1059–1080 (AEVKSKSEELSGLHGQLKEARA). K1064 bears the N6-acetyllysine mark. S1091 and S1110 each carry phosphoserine. 3 disordered regions span residues 1224-1251 (ELLKQRPADTDPSSDLASKLREAEETQN), 1391-1416 (KSHVEDGDVAGSPAAPPAEQDPVELK), and 1509-1534 (ERDTVKKLQEQLDKTDDSSSKEGTSV). Positions 1509-1528 (ERDTVKKLQEQLDKTDDSSS) are enriched in basic and acidic residues.

The protein localises to the endoplasmic reticulum membrane. Acts as a ribosome receptor and mediates interaction between the ribosome and the endoplasmic reticulum membrane. The sequence is that of Ribosome-binding protein 1 (RRBP1) from Canis lupus familiaris (Dog).